The primary structure comprises 238 residues: Large ribosomal subunit protein uL1 (238 aa).

This sequence belongs to the universal ribosomal protein uL1 family. Part of the 50S ribosomal subunit.

Binds directly to 23S rRNA. The L1 stalk is quite mobile in the ribosome, and is involved in E site tRNA release. In terms of biological role, protein L1 is also a translational repressor protein, it controls the translation of the L11 operon by binding to its mRNA. This is Large ribosomal subunit protein uL1 from Saccharopolyspora erythraea (strain ATCC 11635 / DSM 40517 / JCM 4748 / NBRC 13426 / NCIMB 8594 / NRRL 2338).